A 337-amino-acid chain; its full sequence is tRNA N6-adenosine threonylcarbamoyltransferase (337 aa).

Fe cation is bound by residues His111 and His115. Substrate is bound by residues 134 to 138 (LVSGG), Asp167, Gly180, and Asn272. Residue Asp300 participates in Fe cation binding.

This sequence belongs to the KAE1 / TsaD family. Requires Fe(2+) as cofactor.

The protein resides in the cytoplasm. The enzyme catalyses L-threonylcarbamoyladenylate + adenosine(37) in tRNA = N(6)-L-threonylcarbamoyladenosine(37) in tRNA + AMP + H(+). Required for the formation of a threonylcarbamoyl group on adenosine at position 37 (t(6)A37) in tRNAs that read codons beginning with adenine. Is involved in the transfer of the threonylcarbamoyl moiety of threonylcarbamoyl-AMP (TC-AMP) to the N6 group of A37, together with TsaE and TsaB. TsaD likely plays a direct catalytic role in this reaction. This is tRNA N6-adenosine threonylcarbamoyltransferase from Escherichia coli (strain SMS-3-5 / SECEC).